The primary structure comprises 170 residues: Large ribosomal subunit protein bL9 (170 aa).

A disordered region spans residues 149-170; sequence DGDNEDLDEDNAADENEDYSEE.

Belongs to the bacterial ribosomal protein bL9 family.

Functionally, binds to the 23S rRNA. The chain is Large ribosomal subunit protein bL9 from Psychrobacter cryohalolentis (strain ATCC BAA-1226 / DSM 17306 / VKM B-2378 / K5).